A 175-amino-acid polypeptide reads, in one-letter code: Co-chaperone protein HscB homolog (175 aa).

Residues 2 to 74 (NYFQLFNIEV…LQRAEYILVQ (73 aa)) enclose the J domain.

It belongs to the HscB family. Interacts with HscA and stimulates its ATPase activity.

In terms of biological role, co-chaperone involved in the maturation of iron-sulfur cluster-containing proteins. Seems to help targeting proteins to be folded toward HscA. This is Co-chaperone protein HscB homolog from Colwellia psychrerythraea (strain 34H / ATCC BAA-681) (Vibrio psychroerythus).